The following is a 484-amino-acid chain: F-box/LRR-repeat protein At3g59210 (484 aa).

The F-box domain maps to 6–54 (KDIINCLPDNLLCQILSNLSTKEAALTSLLSKRWRYLFALVPNLDFDVL). 5 LRR repeats span residues 144 to 170 (KIGPKDGPRVKLRNVCLPKLKTLNLDS), 172 to 197 (VFEEGKIGFAKLLSGCPVLEELSLLN), 205 to 234 (SCSVSSKILKRLTLYCAHSSRNPKSVSFDT), 303 to 334 (TLYLSYDTLETLNLCCQVIPVFNNLTHLTIES), and 335 to 360 (HPELGWESLPNLLKSCPNLGTLVFQG).

This Arabidopsis thaliana (Mouse-ear cress) protein is F-box/LRR-repeat protein At3g59210.